Consider the following 271-residue polypeptide: MRLYRDNAVVLRQHKLGEADRIVTLLTRQHGLVRAVAKGVRRTKSKFGARLEPFAHIDVQLYPGRNLDIVTQVQTVDAFATDIVDDYTRYTTACAILETAERLAGEERAPALQLHRLTVGALRAVAEHHRPCELILDAFLLRAMGFAGWAPALDDCARCSAPGPHRAFHVAAGGAVCVQCRPPGAATPSPGVLDLMDALFRGDWASTEQVPEWLRGQASGLVAAHLQWHLERQLRTLPLIERARPHAAVGVEDSVRQDGDRDSTTRTPSSA.

The segment at 248–271 (AVGVEDSVRQDGDRDSTTRTPSSA) is disordered. The segment covering 253–264 (DSVRQDGDRDST) has biased composition (basic and acidic residues).

Belongs to the RecO family.

Its function is as follows. Involved in DNA repair and RecF pathway recombination. The chain is DNA repair protein RecO from Rhodococcus opacus (strain B4).